We begin with the raw amino-acid sequence, 350 residues long: DNA polymerase delta subunit 3 (350 aa).

A disordered region spans residues 131 to 350 (EEKSKPLVRP…LESFFKRKAK (220 aa)). Basic and acidic residues-rich tracts occupy residues 146-162 (TTPE…KDMG) and 172-195 (MKKD…EENL). Thr-223 is modified (phosphothreonine). Ser-230 is modified (phosphoserine). Positions 234–248 (SPKETDSNDKDKNND) are enriched in basic and acidic residues. The span at 249–262 (DLEDLLETTAEDSL) shows a compositional bias: acidic residues. The segment covering 274–286 (SETEHSKEPKSEE) has biased composition (basic and acidic residues). The span at 320-332 (LSSSKKQETPSSN) shows a compositional bias: polar residues.

As to quaternary structure, DNA polymerase delta is a heterotrimer of POL3, POL32 and HYS2. POL32 can form homodimers.

It is found in the nucleus. DNA polymerase delta (DNA polymerase III) participates in chromosomal DNA replication. It is required during synthesis of the leading and lagging DNA strands at the replication fork and binds at/or near replication origins and moves along DNA with the replication fork. It has 3'-5' proofreading exonuclease activity that correct errors arising during DNA replication. It is also involved in DNA synthesis during DNA repair. The protein is DNA polymerase delta subunit 3 (POL32) of Saccharomyces cerevisiae (strain ATCC 204508 / S288c) (Baker's yeast).